An 81-amino-acid chain; its full sequence is RNA-binding protein KhpA (81 aa).

The 48-residue stretch at 34 to 81 (KIALRLSVHKSDTGKVIGKQGRTAKAIRTAVFAAGVQSSKKVQFEIFD) folds into the KH domain.

Belongs to the KhpA RNA-binding protein family. Forms a complex with KhpB.

The protein resides in the cytoplasm. A probable RNA chaperone. Forms a complex with KhpB which binds to cellular RNA and controls its expression. Plays a role in peptidoglycan (PG) homeostasis and cell length regulation. In Bacillus subtilis (strain 168), this protein is RNA-binding protein KhpA.